A 529-amino-acid chain; its full sequence is Cytochrome P450 monooxygenase 136 (529 aa).

A helical transmembrane segment spans residues 9–29 (SPLALAVLSIATCQLALVWWY). Position 447 (Cys447) interacts with heme.

It belongs to the cytochrome P450 family. Heme is required as a cofactor.

The protein localises to the membrane. The protein operates within secondary metabolite biosynthesis. Its function is as follows. Cytochrome P450 monooxygenase that is able to use delta(6)-protoilludene as a substrate to produce delta(6)-protoilludene-5-ol. The polypeptide is Cytochrome P450 monooxygenase 136 (Postia placenta (strain ATCC 44394 / Madison 698-R) (Brown rot fungus)).